The chain runs to 386 residues: Succinate--CoA ligase [ADP-forming] subunit beta (386 aa).

Residues 9 to 244 (KELLKQFGVP…LDEEDPAEIE (236 aa)) form the ATP-grasp domain. Residues Lys46, 53 to 55 (GRG), Glu99, Ala102, and Glu107 contribute to the ATP site. Positions 199 and 213 each coordinate Mg(2+). Residues Asn264 and 321 to 323 (GIM) contribute to the substrate site.

Belongs to the succinate/malate CoA ligase beta subunit family. As to quaternary structure, heterotetramer of two alpha and two beta subunits. Requires Mg(2+) as cofactor.

It catalyses the reaction succinate + ATP + CoA = succinyl-CoA + ADP + phosphate. The enzyme catalyses GTP + succinate + CoA = succinyl-CoA + GDP + phosphate. Its pathway is carbohydrate metabolism; tricarboxylic acid cycle; succinate from succinyl-CoA (ligase route): step 1/1. Functionally, succinyl-CoA synthetase functions in the citric acid cycle (TCA), coupling the hydrolysis of succinyl-CoA to the synthesis of either ATP or GTP and thus represents the only step of substrate-level phosphorylation in the TCA. The beta subunit provides nucleotide specificity of the enzyme and binds the substrate succinate, while the binding sites for coenzyme A and phosphate are found in the alpha subunit. This Bordetella avium (strain 197N) protein is Succinate--CoA ligase [ADP-forming] subunit beta.